The following is a 254-amino-acid chain: D-aminoacyl-tRNA deacylase (254 aa).

Residues 61 to 85 (KPTLTVHTPGNLTEDNSRGGNSEEI) are disordered. Residues 65 to 84 (TVHTPGNLTEDNSRGGNSEE) are compositionally biased toward polar residues.

Belongs to the DtdA deacylase family. Monomer. Zn(2+) serves as cofactor.

The enzyme catalyses a D-aminoacyl-tRNA + H2O = a tRNA + a D-alpha-amino acid + H(+). It catalyses the reaction glycyl-tRNA(Ala) + H2O = tRNA(Ala) + glycine + H(+). Its function is as follows. D-aminoacyl-tRNA deacylase with broad substrate specificity. By recycling D-aminoacyl-tRNA to D-amino acids and free tRNA molecules, this enzyme counteracts the toxicity associated with the formation of D-aminoacyl-tRNA entities in vivo. In Methanococcus maripaludis (strain C5 / ATCC BAA-1333), this protein is D-aminoacyl-tRNA deacylase.